Here is a 226-residue protein sequence, read N- to C-terminus: Uracil-DNA glycosylase (226 aa).

D64 serves as the catalytic Proton acceptor.

It belongs to the uracil-DNA glycosylase (UDG) superfamily. UNG family.

It is found in the cytoplasm. It catalyses the reaction Hydrolyzes single-stranded DNA or mismatched double-stranded DNA and polynucleotides, releasing free uracil.. Its function is as follows. Excises uracil residues from the DNA which can arise as a result of misincorporation of dUMP residues by DNA polymerase or due to deamination of cytosine. This Vibrio parahaemolyticus serotype O3:K6 (strain RIMD 2210633) protein is Uracil-DNA glycosylase.